Consider the following 113-residue polypeptide: Putative pterin-4-alpha-carbinolamine dehydratase (113 aa).

This sequence belongs to the pterin-4-alpha-carbinolamine dehydratase family.

The catalysed reaction is (4aS,6R)-4a-hydroxy-L-erythro-5,6,7,8-tetrahydrobiopterin = (6R)-L-erythro-6,7-dihydrobiopterin + H2O. This Chlorobium limicola (strain DSM 245 / NBRC 103803 / 6330) protein is Putative pterin-4-alpha-carbinolamine dehydratase.